Reading from the N-terminus, the 193-residue chain is NAD(P)H-quinone oxidoreductase subunit J (193 aa).

A disordered region spans residues 1–21 (MSDSAPTNPTPTNPAPEESAS).

This sequence belongs to the complex I 30 kDa subunit family. In terms of assembly, NDH-1 can be composed of about 15 different subunits; different subcomplexes with different compositions have been identified which probably have different functions.

The protein resides in the cellular thylakoid membrane. The enzyme catalyses a plastoquinone + NADH + (n+1) H(+)(in) = a plastoquinol + NAD(+) + n H(+)(out). It catalyses the reaction a plastoquinone + NADPH + (n+1) H(+)(in) = a plastoquinol + NADP(+) + n H(+)(out). NDH-1 shuttles electrons from an unknown electron donor, via FMN and iron-sulfur (Fe-S) centers, to quinones in the respiratory and/or the photosynthetic chain. The immediate electron acceptor for the enzyme in this species is believed to be plastoquinone. Couples the redox reaction to proton translocation, and thus conserves the redox energy in a proton gradient. Cyanobacterial NDH-1 also plays a role in inorganic carbon-concentration. This chain is NAD(P)H-quinone oxidoreductase subunit J, found in Synechococcus sp. (strain CC9902).